A 214-amino-acid chain; its full sequence is Adenylate kinase (214 aa).

G10–T15 is an ATP binding site. The segment at S30–V59 is NMP. AMP contacts are provided by residues T31, R36, Q57–V59, G85–R88, and Q92. An LID region spans residues G122–D159. ATP contacts are provided by residues R123 and V132–Y133. The AMP site is built by R156 and R167. An ATP-binding site is contributed by Q200.

Belongs to the adenylate kinase family. Monomer.

The protein localises to the cytoplasm. It carries out the reaction AMP + ATP = 2 ADP. It participates in purine metabolism; AMP biosynthesis via salvage pathway; AMP from ADP: step 1/1. Its function is as follows. Catalyzes the reversible transfer of the terminal phosphate group between ATP and AMP. Plays an important role in cellular energy homeostasis and in adenine nucleotide metabolism. The chain is Adenylate kinase from Shewanella oneidensis (strain ATCC 700550 / JCM 31522 / CIP 106686 / LMG 19005 / NCIMB 14063 / MR-1).